Here is a 557-residue protein sequence, read N- to C-terminus: Glutamine--tRNA ligase (557 aa).

The 'HIGH' region signature appears at 42-52 (PEPNGYLHIGH). ATP is bound by residues 43 to 45 (EPN) and 49 to 55 (HIGHAKS). Positions 75 and 220 each coordinate L-glutamine. ATP-binding positions include T239 and 270-271 (RL). The 'KMSKS' region motif lies at 277 to 281 (LTSKR).

The protein belongs to the class-I aminoacyl-tRNA synthetase family. In terms of assembly, monomer.

It is found in the cytoplasm. The catalysed reaction is tRNA(Gln) + L-glutamine + ATP = L-glutaminyl-tRNA(Gln) + AMP + diphosphate. In Haemophilus influenzae (strain 86-028NP), this protein is Glutamine--tRNA ligase.